A 544-amino-acid polypeptide reads, in one-letter code: Pyruvate kinase (544 aa).

Arg31 contributes to the substrate binding site. Residues Asn33 and Asp61 each coordinate K(+). An ATP-binding site is contributed by 33–36 (NSAH). Arg68 provides a ligand contact to ATP. Glu204 is a Mg(2+) binding site. Positions 227, 228, and 260 each coordinate substrate. Mg(2+) is bound at residue Asp228.

This sequence belongs to the pyruvate kinase family. In terms of assembly, homotetramer. The cofactor is Mg(2+). It depends on K(+) as a cofactor.

The enzyme catalyses pyruvate + ATP = phosphoenolpyruvate + ADP + H(+). It participates in carbohydrate degradation; glycolysis; pyruvate from D-glyceraldehyde 3-phosphate: step 5/5. The chain is Pyruvate kinase from Thermoplasma acidophilum (strain ATCC 25905 / DSM 1728 / JCM 9062 / NBRC 15155 / AMRC-C165).